A 343-amino-acid polypeptide reads, in one-letter code: Methionine import ATP-binding protein MetN (343 aa).

In terms of domain architecture, ABC transporter spans 2–241 (IKLSNITKVF…PKTPLAQKFI (240 aa)). ATP is bound at residue 38–45 (GASGAGKS).

This sequence belongs to the ABC transporter superfamily. Methionine importer (TC 3.A.1.24) family. The complex is composed of two ATP-binding proteins (MetN), two transmembrane proteins (MetI) and a solute-binding protein (MetQ).

It is found in the cell inner membrane. It catalyses the reaction L-methionine(out) + ATP + H2O = L-methionine(in) + ADP + phosphate + H(+). The catalysed reaction is D-methionine(out) + ATP + H2O = D-methionine(in) + ADP + phosphate + H(+). Functionally, part of the ABC transporter complex MetNIQ involved in methionine import. Responsible for energy coupling to the transport system. This Shigella boydii serotype 4 (strain Sb227) protein is Methionine import ATP-binding protein MetN.